The chain runs to 144 residues: Large ribosomal subunit protein uL16 (144 aa).

The protein belongs to the universal ribosomal protein uL16 family. As to quaternary structure, part of the 50S ribosomal subunit.

In terms of biological role, binds 23S rRNA and is also seen to make contacts with the A and possibly P site tRNAs. The chain is Large ribosomal subunit protein uL16 from Enterococcus faecalis (strain ATCC 700802 / V583).